Reading from the N-terminus, the 57-residue chain is Small hydrophobic protein (57 aa).

The Virion surface portion of the chain corresponds to 1–8 (MPAIQPPL). The chain crosses the membrane as a helical span at residues 9-29 (YPTFLLLILLSLIITLYVWII). Residues 30-57 (STITYKTAVRHAALHQRSFSRWSLDHSL) are Intravirion-facing.

The protein belongs to the rubulavirus small hydrophobic protein family. In terms of assembly, interacts with host TNFRSF1A, RIPK1 and IRAK1; these interactions interfere with host NF-kappa-B activation at the level of receptor complexes. Interacts with host protein UBQLN4.

The protein localises to the virion membrane. Its subcellular location is the host cell membrane. Its function is as follows. Plays a role in the inhibition of the host NF-kappa-B pathway. This inhibition occurs at the receptor level, by preventing the signaling of TNFR1 as well as IL-1R and TLR3. This Mumps virus genotype B (strain Miyahara vaccine) (MuV) protein is Small hydrophobic protein (SH).